A 273-amino-acid chain; its full sequence is Dermonecrotic toxin LhSicTox-alphaIA1i (273 aa).

Residue histidine 5 is part of the active site. Positions 25 and 27 each coordinate Mg(2+). Histidine 41 serves as the catalytic Nucleophile. Intrachain disulfides connect cysteine 45-cysteine 51 and cysteine 47-cysteine 190. Aspartate 85 contacts Mg(2+).

This sequence belongs to the arthropod phospholipase D family. Class II subfamily. It depends on Mg(2+) as a cofactor. In terms of tissue distribution, expressed by the venom gland.

It is found in the secreted. The catalysed reaction is an N-(acyl)-sphingosylphosphocholine = an N-(acyl)-sphingosyl-1,3-cyclic phosphate + choline. It catalyses the reaction an N-(acyl)-sphingosylphosphoethanolamine = an N-(acyl)-sphingosyl-1,3-cyclic phosphate + ethanolamine. It carries out the reaction a 1-acyl-sn-glycero-3-phosphocholine = a 1-acyl-sn-glycero-2,3-cyclic phosphate + choline. The enzyme catalyses a 1-acyl-sn-glycero-3-phosphoethanolamine = a 1-acyl-sn-glycero-2,3-cyclic phosphate + ethanolamine. Dermonecrotic toxins cleave the phosphodiester linkage between the phosphate and headgroup of certain phospholipids (sphingolipid and lysolipid substrates), forming an alcohol (often choline) and a cyclic phosphate. This toxin acts on sphingomyelin (SM). It may also act on ceramide phosphoethanolamine (CPE), lysophosphatidylcholine (LPC) and lysophosphatidylethanolamine (LPE), but not on lysophosphatidylserine (LPS), and lysophosphatidylglycerol (LPG). It acts by transphosphatidylation, releasing exclusively cyclic phosphate products as second products. Induces dermonecrosis, hemolysis, increased vascular permeability, edema, inflammatory response, and platelet aggregation. The polypeptide is Dermonecrotic toxin LhSicTox-alphaIA1i (Loxosceles hirsuta (Recluse spider)).